The chain runs to 212 residues: HTH-type transcriptional regulator RutR (212 aa).

An HTH tetR-type domain is found at 17 to 77 (SAKKKAILSA…AVLRQILDIW (61 aa)). The segment at residues 39-58 (TRLEQIAELAGVSKTNLLYY) is a DNA-binding region (H-T-H motif).

Homodimer.

In terms of biological role, master transcription regulator which represses the degradation of pyrimidines (rutABCDEFG) and purines (gcl operon) for maintenance of metabolic balance between pyrimidines and purines. It also regulates the synthesis of pyrimidine nucleotides and arginine from glutamine (carAB) and the supply of glutamate (gadABWX). This chain is HTH-type transcriptional regulator RutR (rutR), found in Escherichia coli O157:H7.